A 105-amino-acid polypeptide reads, in one-letter code: Large ribosomal subunit protein bL21 (105 aa).

Belongs to the bacterial ribosomal protein bL21 family. As to quaternary structure, part of the 50S ribosomal subunit. Contacts protein L20.

Its function is as follows. This protein binds to 23S rRNA in the presence of protein L20. In Rickettsia canadensis (strain McKiel), this protein is Large ribosomal subunit protein bL21.